A 228-amino-acid polypeptide reads, in one-letter code: Prolactin-2B1 (228 aa).

Residues methionine 1 to serine 31 form the signal peptide. Intrachain disulfides connect cysteine 89–cysteine 194 and cysteine 203–cysteine 228. Asparagine 173 carries an N-linked (GlcNAc...) asparagine glycan.

The protein belongs to the somatotropin/prolactin family. Expression restricted to the placenta in trophoblast cells within the labyrinth zone.

The protein localises to the secreted. The protein is Prolactin-2B1 (Prl2b1) of Rattus norvegicus (Rat).